Consider the following 132-residue polypeptide: MGNDIIANMITAIRNANLGRAETVEVPATNLTRNIAKILLREGFIESFSEHQENKNSFLIFILKYRGKKRKPYITTLRRISKPGLRIYSNYQEIPRVLGGTGIVILSTSRGIITDREARQKQVGGEILCYVW.

The protein belongs to the universal ribosomal protein uS8 family. Part of the 30S ribosomal subunit.

The protein resides in the plastid. It is found in the chloroplast. One of the primary rRNA binding proteins, it binds directly to 16S rRNA central domain where it helps coordinate assembly of the platform of the 30S subunit. This Anthoceros angustus (Hornwort) protein is Small ribosomal subunit protein uS8c (rps8).